A 1464-amino-acid polypeptide reads, in one-letter code: Glutamate receptor ionotropic, NMDA 2A (1464 aa).

A signal peptide spans 1 to 22 (MGRVGYWTLLVLPALLVWRGPA). Topologically, residues 23–556 (PSAAAEKGPP…SAFLEPFSAS (534 aa)) are extracellular. H44 serves as a coordination point for Zn(2+). A glycan (N-linked (GlcNAc...) asparagine) is linked at N75. C87 and C320 are joined by a disulfide. Residues H128, E266, and D282 each coordinate Zn(2+). N-linked (GlcNAc...) asparagine glycans are attached at residues N340, N380, N443, and N444. Intrachain disulfides connect C429–C455 and C436–C456. Positions 511, 513, and 518 each coordinate L-glutamate. N-linked (GlcNAc...) asparagine glycosylation is present at N541. The chain crosses the membrane as a helical span at residues 557–576 (VWVMMFVMLLIVSAIAVFVF). Residues 577 to 600 (EYFSPVGYNRNLAKGKAPHGPSFT) are Cytoplasmic-facing. Positions 599–620 (FTIGKAIWLLWGLVFNNSVPVQ) are pore-forming. An intramembrane region (discontinuously helical) is located at residues 601 to 615 (IGKAIWLLWGLVFNN). Residues 616–625 (SVPVQNPKGT) lie on the Cytoplasmic side of the membrane. Residues 626 to 646 (TSKIMVSVWAFFAVIFLASYT) form a helical membrane-spanning segment. Residues 647-814 (ANLAAFMIQE…NEVMSSQLDI (168 aa)) are Extracellular-facing. A glycan (N-linked (GlcNAc...) asparagine) is linked at N687. Positions 689, 690, and 731 each coordinate L-glutamate. The cysteines at positions 745 and 800 are disulfide-linked. The helical transmembrane segment at 815-835 (DNMAGVFYMLAAAMALSLITF) threads the bilayer. At 836-1464 (IWEHLFYWKL…KKMPSIESDV (629 aa)) the chain is on the cytoplasmic side. 3 positions are modified to phosphoserine: S882, S890, and S929. Polar residues-rich tracts occupy residues 1001–1010 (STESKVNSRP) and 1023–1032 (QDSLSQNPVS). Disordered stretches follow at residues 1001–1088 (STES…NFKR) and 1148–1180 (PDPYQDPSENLRKGDSTLPMNRNPLQNEEGLSN). Phosphoserine is present on S1025. 2 stretches are compositionally biased toward basic and acidic residues: residues 1033-1043 (QRDEATAENRT) and 1052-1061 (LPEEMAHSDI). Phosphoserine occurs at positions 1059 and 1062. Over residues 1070–1087 (CHREPDNSKNPKTKDNFK) the composition is skewed to basic and acidic residues. Polar residues predominate over residues 1165–1180 (LPMNRNPLQNEEGLSN). Phosphoserine is present on residues S1198 and S1291. The segment at 1335–1372 (KLSGKKSSLFPQGLEDSKRSKSLLPDHTSDNPFLHSHR) is disordered. The PDZ-binding motif lies at 1462 to 1464 (SDV).

Belongs to the glutamate-gated ion channel (TC 1.A.10.1) family. NR2A/GRIN2A subfamily. As to quaternary structure, heterotetramer. Forms heterotetrameric channels composed of two GluN1/zeta subunits (GRIN1), and two identical GluN2/epsilon subunits (GRIN2A, GRIN2B, GRIN2C or GRIN2D) or GluN3 subunits (GRIN3A or GRIN3B) (in vitro). Can also form heterotetrameric channels that contain at least two GluN1 subunits and at least two different GluN2 subunits (or a combination of one GluN2 and one GluN3 subunits) (in vitro). In vivo, the subunit composition may depend on the expression levels of the different subunits. Found in a complex with GRIN1, GRIN3A and PPP2CB. Found in a complex with GRIN1 and GRIN3B. Interacts with AIP1. Interacts with HIP1 and NETO1. Interacts with SNX27 (via PDZ domain); the interaction is required for recycling to the plasma membrane when endocytosed and prevent degradation in lysosomes. Interacts with PDZ domains of PATJ and DLG4. Interacts with LRFN2. Interacts with RPH3A and DLG4; this ternary complex regulates NMDA receptor composition at postsynaptic membranes. Interacts with SORCS2. Interacts with ARC; preventing ARC oligomerization. Interacts (via the extreme C-terminus) with FRMPD2 (the second PDZ domain); the interaction is direct and is likely to promote NMDAR-mediated neural signal transmission. GRIN2A binds FRMPD2 with lower affinity than GRIN2B.

It is found in the cell projection. Its subcellular location is the dendritic spine. It localises to the cell membrane. The protein localises to the synapse. The protein resides in the postsynaptic cell membrane. It is found in the cytoplasmic vesicle membrane. It catalyses the reaction Ca(2+)(in) = Ca(2+)(out). It carries out the reaction Na(+)(in) = Na(+)(out). The enzyme catalyses K(+)(in) = K(+)(out). Its function is as follows. Component of N-methyl-D-aspartate (NMDA) receptors (NMDARs) that function as heterotetrameric, ligand-gated cation channels with high calcium permeability and voltage-dependent block by Mg(2+). NMDARs participate in synaptic plasticity for learning and memory formation by contributing to the slow phase of excitatory postsynaptic current, long-term synaptic potentiation, and learning. Channel activation requires binding of the neurotransmitter L-glutamate to the GluN2 subunit, glycine or D-serine binding to the GluN1 subunit, plus membrane depolarization to eliminate channel inhibition by Mg(2+). NMDARs mediate simultaneously the potasium efflux and the influx of calcium and sodium. Each GluN2 subunit confers differential attributes to channel properties, including activation, deactivation and desensitization kinetics, pH sensitivity, Ca2(+) permeability, and binding to allosteric modulators. Participates in the synaptic plasticity regulation through activation by the L-glutamate releaseed by BEST1, into the synaptic cleft, upon F2R/PAR-1 activation in astrocyte. This Pan troglodytes (Chimpanzee) protein is Glutamate receptor ionotropic, NMDA 2A.